The chain runs to 267 residues: Kallikrein-14 (267 aa).

The signal sequence occupies residues 1–34 (MSLRVLGSGTWPSAPKMFLLLTALQVLAIAMTQS). Residues 35–40 (QEDENK) constitute a propeptide, activation peptide. Residues 41–265 (IIGGHTCTRS…YRSWIEETMR (225 aa)) form the Peptidase S1 domain. Intrachain disulfides connect Cys-47-Cys-180, Cys-68-Cys-84, Cys-159-Cys-226, Cys-191-Cys-205, and Cys-216-Cys-241. Catalysis depends on charge relay system residues His-83 and Asp-127. Ser-220 functions as the Charge relay system in the catalytic mechanism.

It belongs to the peptidase S1 family. Kallikrein subfamily. Proteolytic cleavage of the activation peptide produces the active enzyme. Highly expressed in CNS, bone marrow and fetal liver. Also expressed in breast, thyroid, kidney, colon, pancreas, spleen, prostate, uterus, small intestine, placenta and skeletal muscle. Among 40 tissues tested, the highest expression is detected in skin followed by breast and prostate (at protein level). Expressed in stratum corneum by sweat ducts and sweat glands and detected in sweat (at protein level).

The protein resides in the secreted. It localises to the extracellular space. Inhibited by SERPINA1, SERPINC1, SERPINE1, SERPINF2, aprotinin, soybean, trypsin inhibitor and leupeptin. Inhibited by serine protease inhibitor SPINK5. Has an autoproteolytic activity which may have a regulatory effect. Activated by citrate and inhibited by zinc and to a lower extent by manganese. Serine-type endopeptidase with a dual trypsin-like and chymotrypsin-like substrate specificity. May activate/inactivate the proteinase-activated receptors F2R, F2RL1 and F2RL3 and other kallikreins including KLK1, KLK3, KLK5 and KLK11. May function in seminal clot liquefaction through direct cleavage of the semenogelin SEMG1 and SEMG2 and activation of KLK3. May function through desmoglein DSG1 cleavage in epidermal desquamation a process by which the most superficial corneocytes are shed from the skin surface. May be involved in several aspects of tumor progression including growth, invasion and angiogenesis. In Homo sapiens (Human), this protein is Kallikrein-14 (KLK14).